The primary structure comprises 399 residues: Methylthioribose kinase (399 aa).

ATP is bound by residues asparagine 40, lysine 57, and 111 to 113 (EDL). Substrate is bound at residue aspartate 229. 246-248 (DAE) is an ATP binding site. Arginine 344 contacts substrate.

Belongs to the methylthioribose kinase family. In terms of assembly, homodimer.

The catalysed reaction is 5-(methylsulfanyl)-D-ribose + ATP = 5-(methylsulfanyl)-alpha-D-ribose 1-phosphate + ADP + H(+). It participates in amino-acid biosynthesis; L-methionine biosynthesis via salvage pathway; S-methyl-5-thio-alpha-D-ribose 1-phosphate from S-methyl-5'-thioadenosine (hydrolase route): step 2/2. Its function is as follows. Catalyzes the phosphorylation of methylthioribose into methylthioribose-1-phosphate. This chain is Methylthioribose kinase, found in Yersinia enterocolitica serotype O:8 / biotype 1B (strain NCTC 13174 / 8081).